A 547-amino-acid chain; its full sequence is Glucose-6-phosphate isomerase 2 (547 aa).

Glutamate 351 serves as the catalytic Proton donor. Active-site residues include histidine 382 and lysine 508.

Belongs to the GPI family.

The protein localises to the cytoplasm. The catalysed reaction is alpha-D-glucose 6-phosphate = beta-D-fructose 6-phosphate. It participates in carbohydrate biosynthesis; gluconeogenesis. It functions in the pathway carbohydrate degradation; glycolysis; D-glyceraldehyde 3-phosphate and glycerone phosphate from D-glucose: step 2/4. Its function is as follows. Catalyzes the reversible isomerization of glucose-6-phosphate to fructose-6-phosphate. This Neisseria meningitidis serogroup B (strain ATCC BAA-335 / MC58) protein is Glucose-6-phosphate isomerase 2.